A 307-amino-acid chain; its full sequence is UDP-N-acetylenolpyruvoylglucosamine reductase (307 aa).

Positions V34–G197 constitute an FAD-binding PCMH-type domain. The active site involves R177. S226 functions as the Proton donor in the catalytic mechanism. E296 is an active-site residue.

The protein belongs to the MurB family. The cofactor is FAD.

It localises to the cytoplasm. It catalyses the reaction UDP-N-acetyl-alpha-D-muramate + NADP(+) = UDP-N-acetyl-3-O-(1-carboxyvinyl)-alpha-D-glucosamine + NADPH + H(+). Its pathway is cell wall biogenesis; peptidoglycan biosynthesis. Functionally, cell wall formation. This Paramagnetospirillum magneticum (strain ATCC 700264 / AMB-1) (Magnetospirillum magneticum) protein is UDP-N-acetylenolpyruvoylglucosamine reductase.